The chain runs to 130 residues: Small ribosomal subunit protein uS8 (130 aa).

Belongs to the universal ribosomal protein uS8 family. Part of the 30S ribosomal subunit. Contacts proteins S5 and S12.

One of the primary rRNA binding proteins, it binds directly to 16S rRNA central domain where it helps coordinate assembly of the platform of the 30S subunit. The chain is Small ribosomal subunit protein uS8 from Edwardsiella ictaluri (strain 93-146).